We begin with the raw amino-acid sequence, 923 residues long: Meiotic recombination protein rec11 (923 aa).

An SCD domain is found at 278 to 365 (LFSRIHDIRA…DRFSLRIVEI (88 aa)).

The protein is Meiotic recombination protein rec11 (rec11) of Schizosaccharomyces pombe (strain 972 / ATCC 24843) (Fission yeast).